The following is a 167-amino-acid chain: MRIATSYEMCAQCCCAAAKFADTLQTKPRRSHVTPIYTIAAISLGASLGALARYGLGLALNAIFPPLPIGTLAANLIAAYVVGVTIAYVGTVPGLSPLWRLFMITGLAGGLSTFSTFTAELFSLLREGRLGMSAGMLGLHVGGSLALLMLGMLTIGLLRKSSLGIAE.

Helical transmembrane passes span 32 to 52 (HVTPIYTIAAISLGASLGALA), 69 to 89 (IGTLAANLIAAYVVGVTIAYV), 102 to 122 (FMITGLAGGLSTFSTFTAELF), and 137 to 157 (LGLHVGGSLALLMLGMLTIGL). Gly109 and Ser112 together coordinate Na(+).

The protein belongs to the fluoride channel Fluc/FEX (TC 1.A.43) family.

It localises to the cell inner membrane. The catalysed reaction is fluoride(in) = fluoride(out). Na(+) is not transported, but it plays an essential structural role and its presence is essential for fluoride channel function. In terms of biological role, fluoride-specific ion channel. Important for reducing fluoride concentration in the cell, thus reducing its toxicity. This Xanthomonas oryzae pv. oryzae (strain KACC10331 / KXO85) protein is Fluoride-specific ion channel FluC.